The chain runs to 365 residues: Putative agmatine deiminase (365 aa).

C356 (amidino-cysteine intermediate) is an active-site residue.

It belongs to the agmatine deiminase family.

It carries out the reaction agmatine + H2O = N-carbamoylputrescine + NH4(+). This Latilactobacillus sakei subsp. sakei (strain 23K) (Lactobacillus sakei subsp. sakei) protein is Putative agmatine deiminase.